The following is a 121-amino-acid chain: Cell division protein FtsL (121 aa).

Residues 1–34 (MISRVTEALSKVKGSMGSHERHALPGVIGDDLLR) are Cytoplasmic-facing. A helical transmembrane segment spans residues 35 to 57 (FGKLPLCLFICIILTAVTVVTTA). At 58 to 121 (HHTRLLTAQR…PSQENIVVQK (64 aa)) the chain is on the periplasmic side.

Belongs to the FtsL family. As to quaternary structure, part of a complex composed of FtsB, FtsL and FtsQ.

The protein resides in the cell inner membrane. Functionally, essential cell division protein. May link together the upstream cell division proteins, which are predominantly cytoplasmic, with the downstream cell division proteins, which are predominantly periplasmic. This Shigella dysenteriae serotype 1 (strain Sd197) protein is Cell division protein FtsL.